Consider the following 256-residue polypeptide: tRNA pseudouridine synthase A (256 aa).

Catalysis depends on Asp-43, which acts as the Nucleophile. Position 94 (Tyr-94) interacts with substrate.

This sequence belongs to the tRNA pseudouridine synthase TruA family.

It catalyses the reaction uridine(38/39/40) in tRNA = pseudouridine(38/39/40) in tRNA. Formation of pseudouridine at positions 38, 39 and 40 in the anticodon stem and loop of transfer RNAs. The chain is tRNA pseudouridine synthase A from Pyrobaculum aerophilum (strain ATCC 51768 / DSM 7523 / JCM 9630 / CIP 104966 / NBRC 100827 / IM2).